The sequence spans 435 residues: uncharacterized protein (435 aa).

12 consecutive transmembrane segments (helical) span residues 14-34 (VSMA…GVGA), 44-64 (TFIL…KLGA), 84-104 (IITG…IALF), 123-143 (FNIA…NFFG), 153-173 (FIVL…LITI), 187-207 (VSGM…FGVI), 224-244 (AIFI…ISAI), 267-287 (FLGN…ISSA), 324-344 (LYIT…EGVA), 346-366 (ITSA…YILI), 375-395 (IVIF…YYQW), and 400-420 (FVFY…IIYR).

It is found in the cell membrane. This is an uncharacterized protein from Methanocaldococcus jannaschii (strain ATCC 43067 / DSM 2661 / JAL-1 / JCM 10045 / NBRC 100440) (Methanococcus jannaschii).